The primary structure comprises 349 residues: Probable dual-specificity RNA methyltransferase RlmN (349 aa).

The Proton acceptor role is filled by Glu94. One can recognise a Radical SAM core domain in the interval 100–321; it reads DEDRATLCVS…TQHGVFATIR (222 aa). A disulfide bridge connects residues Cys107 and Cys332. The [4Fe-4S] cluster site is built by Cys114, Cys118, and Cys121. S-adenosyl-L-methionine contacts are provided by residues 159-160, Ser191, 213-215, and His289; these read GE and SMH. The S-methylcysteine intermediate role is filled by Cys332.

It belongs to the radical SAM superfamily. RlmN family. [4Fe-4S] cluster is required as a cofactor.

It is found in the cytoplasm. The catalysed reaction is adenosine(2503) in 23S rRNA + 2 reduced [2Fe-2S]-[ferredoxin] + 2 S-adenosyl-L-methionine = 2-methyladenosine(2503) in 23S rRNA + 5'-deoxyadenosine + L-methionine + 2 oxidized [2Fe-2S]-[ferredoxin] + S-adenosyl-L-homocysteine. The enzyme catalyses adenosine(37) in tRNA + 2 reduced [2Fe-2S]-[ferredoxin] + 2 S-adenosyl-L-methionine = 2-methyladenosine(37) in tRNA + 5'-deoxyadenosine + L-methionine + 2 oxidized [2Fe-2S]-[ferredoxin] + S-adenosyl-L-homocysteine. Functionally, specifically methylates position 2 of adenine 2503 in 23S rRNA and position 2 of adenine 37 in tRNAs. The polypeptide is Probable dual-specificity RNA methyltransferase RlmN (Phocaeicola vulgatus (strain ATCC 8482 / DSM 1447 / JCM 5826 / CCUG 4940 / NBRC 14291 / NCTC 11154) (Bacteroides vulgatus)).